The primary structure comprises 848 residues: Paramyosin (848 aa).

Residues Ala-1–Asp-9 form a nonhelical region region. The stretch at Leu-10–Ser-833 forms a coiled coil. The segment at Val-834–Leu-848 is nonhelical region.

Belongs to the paramyosin family. In terms of assembly, homodimer.

Its subcellular location is the cytoplasm. The protein localises to the myofibril. Its function is as follows. Paramyosin is a major structural component of many thick filaments isolated from invertebrate muscles. This Dirofilaria immitis (Canine heartworm) protein is Paramyosin.